The primary structure comprises 461 residues: D-phenylhydantoinase (461 aa).

Residues H59, H61, and K151 each coordinate a divalent metal cation. K151 carries the post-translational modification N6-carboxylysine. Y156 serves as a coordination point for substrate. 2 residues coordinate a divalent metal cation: H182 and H239. Position 286 (S286) interacts with substrate. An a divalent metal cation-binding site is contributed by D313. N335 serves as a coordination point for substrate.

It belongs to the metallo-dependent hydrolases superfamily. Hydantoinase/dihydropyrimidinase family. In terms of assembly, homotetramer. A divalent metal cation is required as a cofactor. Post-translationally, carboxylation allows a single lysine to coordinate two divalent metal cations.

It carries out the reaction D-5-phenylhydantoin + H2O = N-carbamoyl-D-phenylglycine + H(+). In terms of biological role, catalyzes the stereospecific hydrolysis of the cyclic amide bond of D-hydantoin derivatives with an aromatic side chains at the 5'-position. Has no activity on dihydropyrimidines. The physiological function is unknown. The polypeptide is D-phenylhydantoinase (Escherichia coli (strain SE11)).